Reading from the N-terminus, the 100-residue chain is Aspartyl/glutamyl-tRNA(Asn/Gln) amidotransferase subunit C (100 aa).

The protein belongs to the GatC family. In terms of assembly, heterotrimer of A, B and C subunits.

It carries out the reaction L-glutamyl-tRNA(Gln) + L-glutamine + ATP + H2O = L-glutaminyl-tRNA(Gln) + L-glutamate + ADP + phosphate + H(+). The catalysed reaction is L-aspartyl-tRNA(Asn) + L-glutamine + ATP + H2O = L-asparaginyl-tRNA(Asn) + L-glutamate + ADP + phosphate + 2 H(+). Functionally, allows the formation of correctly charged Asn-tRNA(Asn) or Gln-tRNA(Gln) through the transamidation of misacylated Asp-tRNA(Asn) or Glu-tRNA(Gln) in organisms which lack either or both of asparaginyl-tRNA or glutaminyl-tRNA synthetases. The reaction takes place in the presence of glutamine and ATP through an activated phospho-Asp-tRNA(Asn) or phospho-Glu-tRNA(Gln). The polypeptide is Aspartyl/glutamyl-tRNA(Asn/Gln) amidotransferase subunit C (Janthinobacterium sp. (strain Marseille) (Minibacterium massiliensis)).